The following is a 1322-amino-acid chain: Phosphoribosylformylglycinamidine synthase (1322 aa).

Gly300–Asp311 provides a ligand contact to ATP. Polar residues predominate over residues Gln593–Pro608. Positions Gln593–Pro613 are disordered. Ala702 provides a ligand contact to ATP. The Mg(2+) site is built by Asp703, Glu742, Asn746, and Asp915. Ser917 lines the ATP pocket. One can recognise a Glutamine amidotransferase type-1 domain in the interval Val1073–Gly1322. Catalysis depends on Cys1166, which acts as the Nucleophile. Residues His1287 and Glu1289 contribute to the active site.

In the N-terminal section; belongs to the FGAMS family. In terms of assembly, monomer.

The protein localises to the cytoplasm. The enzyme catalyses N(2)-formyl-N(1)-(5-phospho-beta-D-ribosyl)glycinamide + L-glutamine + ATP + H2O = 2-formamido-N(1)-(5-O-phospho-beta-D-ribosyl)acetamidine + L-glutamate + ADP + phosphate + H(+). The protein operates within purine metabolism; IMP biosynthesis via de novo pathway; 5-amino-1-(5-phospho-D-ribosyl)imidazole from N(2)-formyl-N(1)-(5-phospho-D-ribosyl)glycinamide: step 1/2. Functionally, phosphoribosylformylglycinamidine synthase involved in the purines biosynthetic pathway. Catalyzes the ATP-dependent conversion of formylglycinamide ribonucleotide (FGAR) and glutamine to yield formylglycinamidine ribonucleotide (FGAM) and glutamate. This is Phosphoribosylformylglycinamidine synthase from Xylella fastidiosa (strain 9a5c).